The primary structure comprises 125 residues: Protein ApaG (125 aa).

The region spanning 1 to 125 is the ApaG domain; sequence MADSPRVCVQ…FRLAVPTLIH (125 aa).

The polypeptide is Protein ApaG (Cronobacter sakazakii (strain ATCC BAA-894) (Enterobacter sakazakii)).